A 236-amino-acid chain; its full sequence is 2,3,4,5-tetrahydropyridine-2,6-dicarboxylate N-acetyltransferase (236 aa).

Belongs to the transferase hexapeptide repeat family. DapH subfamily.

It carries out the reaction (S)-2,3,4,5-tetrahydrodipicolinate + acetyl-CoA + H2O = L-2-acetamido-6-oxoheptanedioate + CoA. It participates in amino-acid biosynthesis; L-lysine biosynthesis via DAP pathway; LL-2,6-diaminopimelate from (S)-tetrahydrodipicolinate (acetylase route): step 1/3. Its function is as follows. Catalyzes the transfer of an acetyl group from acetyl-CoA to tetrahydrodipicolinate. The polypeptide is 2,3,4,5-tetrahydropyridine-2,6-dicarboxylate N-acetyltransferase (Geobacillus thermodenitrificans (strain NG80-2)).